The following is a 539-amino-acid chain: Phosphoenolpyruvate carboxykinase (ATP) (539 aa).

The substrate site is built by R64, Y206, and K212. Residues K212, H231, and 247 to 255 (GLSGTGKTT) contribute to the ATP site. Residues K212 and H231 each contribute to the Mn(2+) site. D268 contributes to the Mn(2+) binding site. ATP contacts are provided by residues E296, R332, 448 to 449 (RI), and T454. R332 provides a ligand contact to substrate.

It belongs to the phosphoenolpyruvate carboxykinase (ATP) family. As to quaternary structure, monomer. It depends on Mn(2+) as a cofactor.

The protein resides in the cytoplasm. It carries out the reaction oxaloacetate + ATP = phosphoenolpyruvate + ADP + CO2. It participates in carbohydrate biosynthesis; gluconeogenesis. Involved in the gluconeogenesis. Catalyzes the conversion of oxaloacetate (OAA) to phosphoenolpyruvate (PEP) through direct phosphoryl transfer between the nucleoside triphosphate and OAA. The chain is Phosphoenolpyruvate carboxykinase (ATP) from Pectobacterium atrosepticum (strain SCRI 1043 / ATCC BAA-672) (Erwinia carotovora subsp. atroseptica).